The following is a 679-amino-acid chain: DNA ligase (679 aa).

NAD(+) contacts are provided by residues 86–90 (DEAYD) and 129–130 (ST). The N6-AMP-lysine intermediate role is filled by lysine 167. The NAD(+) site is built by arginine 183, glutamate 214, and lysine 326. Residues cysteine 417, cysteine 420, cysteine 433, and cysteine 439 each coordinate Zn(2+). Residues 599–679 (GEKSPISGKT…EAYRQLVSLD (81 aa)) enclose the BRCT domain.

This sequence belongs to the NAD-dependent DNA ligase family. LigA subfamily. Mg(2+) serves as cofactor. It depends on Mn(2+) as a cofactor.

It carries out the reaction NAD(+) + (deoxyribonucleotide)n-3'-hydroxyl + 5'-phospho-(deoxyribonucleotide)m = (deoxyribonucleotide)n+m + AMP + beta-nicotinamide D-nucleotide.. In terms of biological role, DNA ligase that catalyzes the formation of phosphodiester linkages between 5'-phosphoryl and 3'-hydroxyl groups in double-stranded DNA using NAD as a coenzyme and as the energy source for the reaction. It is essential for DNA replication and repair of damaged DNA. The sequence is that of DNA ligase from Desulfotalea psychrophila (strain LSv54 / DSM 12343).